We begin with the raw amino-acid sequence, 213 residues long: MGTWILFACLLGAAFSMPLPPHPGHPGYINFSYEVLTPLKWYQSMIRHPYPSYGYEPMGGWLHHQIIPVVSQQTPQNHALQPHHHIPMVPAQQPVVPQQPMMPVPGQHSMTPTQHHQPNLPLPAQQPFQPQSIQPQPHQPLQPHQPLQPMQPMQPLQPLQPLQPQPPVHPIQPLPPQPPLPPIFPMQPLPPMLPDLPLEAWPATDKTKREEVD.

Residues 1–16 (MGTWILFACLLGAAFS) form the signal peptide. Position 32 is a phosphoserine (serine 32). 2 stretches are compositionally biased toward low complexity: residues 96 to 105 (VPQQPMMPVP) and 114 to 160 (QHHQ…QPLQ). Positions 96–213 (VPQQPMMPVP…TDKTKREEVD (118 aa)) are disordered. Over residues 161 to 194 (PLQPQPPVHPIQPLPPQPPLPPIFPMQPLPPMLP) the composition is skewed to pro residues.

It belongs to the amelogenin family. Interacts with KRT5. Post-translationally, phosphorylated by FAM20C in vitro.

It localises to the secreted. It is found in the extracellular space. Its subcellular location is the extracellular matrix. Its function is as follows. Plays a role in the biomineralization of teeth. Seems to regulate the formation of crystallites during the secretory stage of tooth enamel development. Thought to play a major role in the structural organization and mineralization of developing enamel. The protein is Amelogenin, X isoform (AMELX) of Bos taurus (Bovine).